The primary structure comprises 863 residues: Leucine-rich repeat and death domain-containing protein 1 (863 aa).

Disordered regions lie at residues 1-37 (MSEK…KETS) and 51-100 (SSNQ…SQSL). Low complexity predominate over residues 88-100 (SETSTRTETSQSL). LRR repeat units lie at residues 143–166 (CKDN…ILKI), 167–189 (KYVK…DSGD), 190–213 (LLGL…IQLL), 214–236 (HNLR…ISQL), 238–259 (NIRQ…LECL), 260–282 (GNLE…LPSL), 284–305 (YLRV…LCFL), 306–328 (PKLI…IREL), 329–351 (KNLE…IFQL), 353–374 (KIKE…IENF), 375–397 (RELR…ICCC), 398–420 (AMLE…IHKL), 422–443 (NLRK…ISHL), 445–466 (NICS…IKNC), 468–489 (KIIK…LCAL), 490–513 (DSLY…SFSK), 515–535 (LLHL…FCSL), 536–558 (INLK…ISNM), 560–581 (SLHV…LCTL), 582–604 (ENLR…ICNL), 606–627 (RIQK…LCQL), 630–653 (LEQL…LSNM), 654–676 (TQLK…IGEL), 678–699 (NLVS…LLSL), 700–722 (NDLQ…IYNL), and 724–745 (SLKE…ICKG). One can recognise a Death domain in the interval 767-855 (EKIFKIVANN…EIMDKITALN (89 aa)). The stretch at 856–863 (LFTRAIKF) is one LRR 27 repeat.

In Macaca fascicularis (Crab-eating macaque), this protein is Leucine-rich repeat and death domain-containing protein 1 (LRRD1).